The following is a 265-amino-acid chain: Mlc titration factor A (265 aa).

Zn(2+) is bound by residues His-111, His-148, His-152, and Glu-211.

Belongs to the MtfA family. Interacts with Mlc. The cofactor is Zn(2+).

The protein localises to the cytoplasm. Its function is as follows. Involved in the modulation of the activity of the glucose-phosphotransferase system (glucose-PTS). Interacts with the transcriptional repressor Mlc, preventing its interaction with DNA and leading to the modulation of expression of genes regulated by Mlc, including ptsG, which encodes the PTS system glucose-specific EIICB component. Shows zinc-dependent metallopeptidase activity. This chain is Mlc titration factor A, found in Salmonella agona (strain SL483).